The following is a 361-amino-acid chain: Molybdenum import ATP-binding protein ModC (361 aa).

In terms of domain architecture, ABC transporter spans 1-228 (MLTINIEKQL…EQMRPWVPLQ (228 aa)). 31–38 (GRSGAGKT) is an ATP binding site. The region spanning 289–356 (RSSIRNVLKG…IKGVTMTQMD (68 aa)) is the Mop domain.

The protein belongs to the ABC transporter superfamily. Molybdate importer (TC 3.A.1.8) family. In terms of assembly, the complex is composed of two ATP-binding proteins (ModC), two transmembrane proteins (ModB) and a solute-binding protein (ModA).

Its subcellular location is the cell inner membrane. It catalyses the reaction molybdate(out) + ATP + H2O = molybdate(in) + ADP + phosphate + H(+). In terms of biological role, part of the ABC transporter complex ModABC involved in molybdenum import. Responsible for energy coupling to the transport system. In Shewanella oneidensis (strain ATCC 700550 / JCM 31522 / CIP 106686 / LMG 19005 / NCIMB 14063 / MR-1), this protein is Molybdenum import ATP-binding protein ModC.